A 95-amino-acid polypeptide reads, in one-letter code: Co-chaperonin GroES (95 aa).

Belongs to the GroES chaperonin family. Heptamer of 7 subunits arranged in a ring. Interacts with the chaperonin GroEL.

The protein resides in the cytoplasm. Functionally, together with the chaperonin GroEL, plays an essential role in assisting protein folding. The GroEL-GroES system forms a nano-cage that allows encapsulation of the non-native substrate proteins and provides a physical environment optimized to promote and accelerate protein folding. GroES binds to the apical surface of the GroEL ring, thereby capping the opening of the GroEL channel. The polypeptide is Co-chaperonin GroES (Deinococcus radiodurans (strain ATCC 13939 / DSM 20539 / JCM 16871 / CCUG 27074 / LMG 4051 / NBRC 15346 / NCIMB 9279 / VKM B-1422 / R1)).